Consider the following 85-residue polypeptide: Homeobox protein liguleless 3 (85 aa).

One can recognise an ELK domain in the interval 1-21 (ELKEMLLKKYSGCLSRLRSEF). Positions 22–85 (LKKRKKGKLP…NQRKRHWKPS (64 aa)) form a DNA-binding region, homeobox; TALE-type.

This sequence belongs to the TALE/KNOX homeobox family.

The protein resides in the nucleus. In terms of biological role, probably binds to the DNA sequence 5'-TGAC-3'. The protein is Homeobox protein liguleless 3 (LG3) of Zea mays (Maize).